A 219-amino-acid polypeptide reads, in one-letter code: Large ribosomal subunit protein uL3 (219 aa).

This sequence belongs to the universal ribosomal protein uL3 family. As to quaternary structure, part of the 50S ribosomal subunit. Forms a cluster with proteins L14 and L19.

Functionally, one of the primary rRNA binding proteins, it binds directly near the 3'-end of the 23S rRNA, where it nucleates assembly of the 50S subunit. The protein is Large ribosomal subunit protein uL3 of Corynebacterium kroppenstedtii (strain DSM 44385 / JCM 11950 / CIP 105744 / CCUG 35717).